We begin with the raw amino-acid sequence, 452 residues long: Probable phosphoglucosamine mutase (452 aa).

S101 (phosphoserine intermediate) is an active-site residue. Mg(2+)-binding residues include S101, D242, D244, and D246. Phosphoserine is present on S101.

It belongs to the phosphohexose mutase family. Mg(2+) is required as a cofactor. Post-translationally, activated by phosphorylation.

The enzyme catalyses alpha-D-glucosamine 1-phosphate = D-glucosamine 6-phosphate. Its function is as follows. Catalyzes the conversion of glucosamine-6-phosphate to glucosamine-1-phosphate. This chain is Probable phosphoglucosamine mutase, found in Methanosphaera stadtmanae (strain ATCC 43021 / DSM 3091 / JCM 11832 / MCB-3).